A 179-amino-acid chain; its full sequence is Inner membrane-spanning protein YciB (179 aa).

Transmembrane regions (helical) follow at residues 3 to 23 (FLFD…FGIY), 49 to 69 (PMQW…ILLH), 76 to 96 (WKPT…VIGW), 121 to 141 (VAWA…AYQF), and 149 to 169 (FKLF…SIWL).

This sequence belongs to the YciB family.

It is found in the cell inner membrane. Plays a role in cell envelope biogenesis, maintenance of cell envelope integrity and membrane homeostasis. The sequence is that of Inner membrane-spanning protein YciB from Cupriavidus metallidurans (strain ATCC 43123 / DSM 2839 / NBRC 102507 / CH34) (Ralstonia metallidurans).